A 158-amino-acid polypeptide reads, in one-letter code: Small ribosomal subunit protein uS7 (158 aa).

This sequence belongs to the universal ribosomal protein uS7 family. As to quaternary structure, part of the 30S ribosomal subunit. Contacts proteins S9 and S11.

One of the primary rRNA binding proteins, it binds directly to 16S rRNA where it nucleates assembly of the head domain of the 30S subunit. Is located at the subunit interface close to the decoding center, probably blocks exit of the E-site tRNA. The polypeptide is Small ribosomal subunit protein uS7 (Flavobacterium johnsoniae (strain ATCC 17061 / DSM 2064 / JCM 8514 / BCRC 14874 / CCUG 350202 / NBRC 14942 / NCIMB 11054 / UW101) (Cytophaga johnsonae)).